A 261-amino-acid chain; its full sequence is Methyl-coenzyme M reductase subunit gamma (261 aa).

A coenzyme M-binding site is contributed by arginine 123.

It belongs to the methyl-coenzyme M reductase gamma subunit family. As to quaternary structure, MCR is a hexamer of two alpha, two beta, and two gamma chains, forming a dimer of heterotrimers. It depends on coenzyme F430 as a cofactor.

It localises to the cytoplasm. It catalyses the reaction coenzyme B + methyl-coenzyme M = methane + coenzyme M-coenzyme B heterodisulfide. It participates in one-carbon metabolism; methyl-coenzyme M reduction; methane from methyl-coenzyme M: step 1/1. Functionally, component of the methyl-coenzyme M reductase (MCR) I that catalyzes the reductive cleavage of methyl-coenzyme M (CoM-S-CH3 or 2-(methylthio)ethanesulfonate) using coenzyme B (CoB or 7-mercaptoheptanoylthreonine phosphate) as reductant which results in the production of methane and the mixed heterodisulfide of CoB and CoM (CoM-S-S-CoB). This is the final step in methanogenesis. The sequence is that of Methyl-coenzyme M reductase subunit gamma (mcrG) from Methanococcus voltae.